The sequence spans 136 residues: uncharacterized protein (136 aa).

Residues 1–33 (MRDHLPPGLPPDPFADDPCDPSAALEAVEPGQP) form a disordered region.

It to M.leprae ML0386.

This is an uncharacterized protein from Mycobacterium tuberculosis (strain CDC 1551 / Oshkosh).